The primary structure comprises 198 residues: Imidazoleglycerol-phosphate dehydratase (198 aa).

The protein belongs to the imidazoleglycerol-phosphate dehydratase family.

Its subcellular location is the cytoplasm. The enzyme catalyses D-erythro-1-(imidazol-4-yl)glycerol 3-phosphate = 3-(imidazol-4-yl)-2-oxopropyl phosphate + H2O. It participates in amino-acid biosynthesis; L-histidine biosynthesis; L-histidine from 5-phospho-alpha-D-ribose 1-diphosphate: step 6/9. The sequence is that of Imidazoleglycerol-phosphate dehydratase from Gluconacetobacter diazotrophicus (strain ATCC 49037 / DSM 5601 / CCUG 37298 / CIP 103539 / LMG 7603 / PAl5).